Consider the following 765-residue polypeptide: Zinc transporter ZIP6 (765 aa).

An N-terminal signal peptide occupies residues 1–20; it reads MATDLSVIMILTFALWVTSP. Residues 21–335 lie on the Extracellular side of the membrane; it reads LHELQSTAAF…PKTYSLQIAW (315 aa). An N-linked (GlcNAc...) asparagine glycan is attached at asparagine 68. 2 stretches are compositionally biased toward basic and acidic residues: residues 96-135 and 174-186; these read DHEH…DHEH and RPAE…RNIK. Disordered stretches follow at residues 96 to 196 and 209 to 257; these read DHEH…EVTS and VETI…SEPR. Residues 187 to 196 are compositionally biased toward low complexity; it reads ESASSSEVTS. Over residues 224 to 233 the composition is skewed to polar residues; sequence VNPSTPPSIT. Positions 238 to 247 are enriched in basic residues; sequence VGRLSRLARK. Positions 248-257 are enriched in basic and acidic residues; that stretch reads KSNESVSEPR. 3 N-linked (GlcNAc...) asparagine glycosylation sites follow: asparagine 250, asparagine 275, and asparagine 292. The helical transmembrane segment at 336–356 threads the bilayer; that stretch reads LGGFIAISIISFLSLLGVILV. At 357-365 the chain is on the cytoplasmic side; that stretch reads PLMNRVFFK. Residues 366-386 form a helical membrane-spanning segment; it reads FLLSFLVALAVGTLSGDALLH. At 387-433 the chain is on the extracellular side; sequence LLPHSHASHQHSHSHEEPAMEMKRGPLFSHLSAQNIEESSYFDSTWK. A helical transmembrane segment spans residues 434–454; sequence GLTALGGLYFMFLVEHVLTLI. At 455–667 the chain is on the cytoplasmic side; it reads KQFKDKKKKN…LKAGMTVKQA (213 aa). Residues 458-519 form a disordered region; the sequence is KDKKKKNQKK…EPSPFDSQQP (62 aa). Residues 475–495 adopt a coiled-coil conformation; that stretch reads ESKKQLSKYDSQLSSNEEKVD. 2 positions are modified to phosphoserine: serine 481 and serine 488. A compositionally biased stretch (basic and acidic residues) spans 490–508; it reads NEEKVDPGERPESYLRADS. The span at 509–519 shows a compositional bias: polar residues; sequence QEPSPFDSQQP. Residues 668-688 form a helical membrane-spanning segment; the sequence is VLYNALSAMLAYLGMATGIFI. Topologically, residues 689–696 are extracellular; that stretch reads GHYAENVS. A glycan (N-linked (GlcNAc...) asparagine) is linked at asparagine 694. Residues 697–717 form a helical membrane-spanning segment; the sequence is MWIFALTAGLFMYVALVDMVP. The Cytoplasmic portion of the chain corresponds to 718-734; that stretch reads EMLHNDASDHGCSRWGY. Residues 735 to 755 form a helical membrane-spanning segment; it reads FFLQNAGILLGFGIMLLISIF. The Extracellular portion of the chain corresponds to 756 to 765; the sequence is EHKIVFRINF.

It belongs to the ZIP transporter (TC 2.A.5) family. As to quaternary structure, interacts with SLC39A10; which triggers cells to undergo EMT and mitosis. Found in a complex with SLC39A6, SLC39A10 and with the 'Ser-727' phosphorylated form of STAT3 throughout mitosis. Found in a complex with SLC39A6, SLC39A10 and with NCAM1; this complex controls NCAM1 phosphorylation and integration into focal adhesion complexes during epithelial-to-mesenchymal transition (EMT). Found in a complex with SLC39A6, SLC39A10 and with GSK3B that controls NCAM1 phosphorylation. Post-translationally, cleaved on the N-terminus before locating to the plasma membrane. In terms of processing, N-glycosylated. Phosphorylated by ZAP70 in response to TCR stimulation leading to its activation. As to expression, highly expressed in the brain and testis. In the brain strongly expressed in the CA1 and CA3 regions, Purkinje cells in cerebellum and dentate gyrus in hippocampus. In testis found in spermatids or mature sperms in the central areas of seminiferous tubules.

Its subcellular location is the cell membrane. It is found in the cell projection. It localises to the lamellipodium membrane. The protein localises to the membrane raft. The protein resides in the apical cell membrane. The catalysed reaction is Zn(2+)(in) = Zn(2+)(out). In terms of biological role, zinc-influx transporter which plays a role in zinc homeostasis and in the induction of epithelial-to-mesenchymal transition (EMT). When associated with SLC39A10, the heterodimer formed by SLC39A10 and SLC39A6 mediates cellular zinc uptake to trigger cells to undergo epithelial- to-mesenchymal transition (EMT). The SLC39A10-SLC39A6 heterodimer also controls NCAM1 phosphorylation and its integration into focal adhesion complexes during EMT. Zinc influx inactivates GSK3B, enabling unphosphorylated SNAI1 in the nucleus to down-regulate adherence genes such as E-cadherin, causing loss of cell adherence. In addition, the SLC39A10-SLC39A6 heterodimer plays an essentiel role in initiating mitosis by importing zinc into cells to initiate a pathway resulting in the onset of mitosis. Participates in the T-cell receptor signaling regulation by mediating cellular zinc uptake into activated lymphocytes. Regulates the zinc influx necessary for proper meiotic progression to metaphase II (MII) that allows the oocyte-to-egg transition. This Mus musculus (Mouse) protein is Zinc transporter ZIP6.